Here is a 632-residue protein sequence, read N- to C-terminus: Phosphoglucomutase, chloroplastic (632 aa).

The N-terminal 72 residues, 1 to 72, are a transit peptide targeting the chloroplast; that stretch reads MAMESALTST…PSSPSTSVAQ (72 aa). Alpha-D-glucose 1,6-bisphosphate contacts are provided by Arg97 and Ser190. The Phosphoserine intermediate role is filled by Ser190. The Mg(2+) site is built by Ser190, Asp355, Asp357, and Asp359. A Phosphoserine modification is found at Ser190. Alpha-D-glucose 1,6-bisphosphate is bound by residues Asp359, Arg360, Thr423, Glu442, Ser444, and Lys455.

It belongs to the phosphohexose mutase family. As to quaternary structure, monomer. Mg(2+) serves as cofactor.

The protein resides in the plastid. It localises to the chloroplast. The enzyme catalyses alpha-D-glucose 1-phosphate = alpha-D-glucose 6-phosphate. It carries out the reaction O-phospho-L-seryl-[protein] + alpha-D-glucose 1-phosphate = alpha-D-glucose 1,6-bisphosphate + L-seryl-[protein]. It catalyses the reaction alpha-D-glucose 1,6-bisphosphate + L-seryl-[protein] = O-phospho-L-seryl-[protein] + alpha-D-glucose 6-phosphate. Inhibited by the Calvin cycle intermediates fructose-1,6-bisphosphate and ribulose-1,5-bisphosphate. In terms of biological role, catalyzes the reversible isomerization of alpha-D-glucose 1-phosphate to alpha-D-glucose 6-phosphate. The mechanism proceeds via the intermediate compound alpha-D-glucose 1,6-bisphosphate. This enzyme participates in both the breakdown and synthesis of glucose. Promotes gravitropic responses, negative in shoots but positive in roots, by facilitating starch granules (statoliths) formation. The polypeptide is Phosphoglucomutase, chloroplastic (PGMP) (Solanum tuberosum (Potato)).